A 615-amino-acid chain; its full sequence is Zinc finger protein 653 (615 aa).

Disordered stretches follow at residues 1–46 (MAER…ARRR), 93–115 (RSGR…KRRR), and 174–235 (PLSD…SGLI). A compositionally biased stretch (low complexity) spans 7 to 25 (EPGAEAEAGAGGEAAAEEG). Positions 106-115 (KKPKRKKRRR) are enriched in basic residues. Low complexity-rich tracts occupy residues 192–203 (GSSDSSSSGSSS) and 212–232 (QPAK…TGSS). C2H2-type zinc fingers lie at residues 467–492 (FHCP…NLVH), 498–522 (KVCP…MIIH), 528–550 (FTCE…RRTH), 556–578 (LQCE…MKKH), and 586–609 (FTCD…LKSH).

It belongs to the krueppel C2H2-type zinc-finger protein family. As to quaternary structure, interacts with NR5A1. Highly expressed in testis and spleen. Moderately expressed in lung, adrenal gland, uterus, and ovary. Very low expression in pancreas, heart, skeletal muscle, adipose tissue, kidney, and liver.

Its subcellular location is the nucleus. Its function is as follows. Transcriptional repressor. May repress NR5A1, PPARG, NR1H3, NR4A2, ESR1 and NR3C1 transcriptional activity. This chain is Zinc finger protein 653 (Znf653), found in Mus musculus (Mouse).